Here is a 253-residue protein sequence, read N- to C-terminus: Triosephosphate isomerase (253 aa).

Residue Asn-9–Lys-11 coordinates substrate. The Electrophile role is filled by His-97. Catalysis depends on Glu-169, which acts as the Proton acceptor. Substrate-binding positions include Gly-175, Ser-215, and Gly-236 to Gly-237.

It belongs to the triosephosphate isomerase family. In terms of assembly, homodimer.

It is found in the cytoplasm. It carries out the reaction D-glyceraldehyde 3-phosphate = dihydroxyacetone phosphate. It functions in the pathway carbohydrate biosynthesis; gluconeogenesis. It participates in carbohydrate degradation; glycolysis; D-glyceraldehyde 3-phosphate from glycerone phosphate: step 1/1. Involved in the gluconeogenesis. Catalyzes stereospecifically the conversion of dihydroxyacetone phosphate (DHAP) to D-glyceraldehyde-3-phosphate (G3P). The protein is Triosephosphate isomerase of Staphylococcus epidermidis (strain ATCC 35984 / DSM 28319 / BCRC 17069 / CCUG 31568 / BM 3577 / RP62A).